Reading from the N-terminus, the 668-residue chain is uncharacterized protein (668 aa).

Transmembrane regions (helical) follow at residues phenylalanine 182–glycine 202, proline 208–tryptophan 228, valine 286–valine 306, isoleucine 321–tyrosine 341, alanine 379–isoleucine 399, isoleucine 430–leucine 450, phenylalanine 499–phenylalanine 519, leucine 557–serine 577, and valine 587–isoleucine 607.

Its subcellular location is the membrane. This is an uncharacterized protein from Schizosaccharomyces pombe (strain 972 / ATCC 24843) (Fission yeast).